The primary structure comprises 464 residues: 17,18-epoxy-17-hydroxycur-19-ene N-malonyltransferase (464 aa).

Catalysis depends on proton acceptor residues His191 and Asp403.

The protein belongs to the plant acyltransferase family. As to quaternary structure, monomer. Mainly expressed in roots.

It localises to the cytoplasm. It catalyses the reaction 17,18-epoxy-17-hydroxycur-19-ene + malonyl-CoA = prestrychnine + CoA. The protein operates within alkaloid biosynthesis. In terms of biological role, malonylransferase involved in the biosynthesis of curare monoterpene indole alkaloids (MIAs), natural products such as strychnine, a neurotoxic compound used as a pesticide to control rodents, and its pharmacologically active derivatives, including brucine, used to regulate blood pressure. Curare alkaloids act as animal glycine receptor antagonists. Catalyzes the conversion of 17,18-epoxy-17-hydroxycur-19-ene (Wieland-Gumlich aldehyde) to prestrychnine, which is spontaneously converted into strychnine and isostrychnine. In Strychnos nux-vomica (Poison nut), this protein is 17,18-epoxy-17-hydroxycur-19-ene N-malonyltransferase.